The chain runs to 328 residues: 2-oxoglutarate-dependent dioxygenase gloE (328 aa).

The Fe2OG dioxygenase domain maps to 170–271 (TRTNLTFLKY…RYTLAYFLRP (102 aa)). The Fe cation site is built by His-194, Asp-196, and His-249. Residue Arg-262 coordinates 2-oxoglutarate.

The protein belongs to the iron/ascorbate-dependent oxidoreductase family. Fe(2+) is required as a cofactor.

It functions in the pathway mycotoxin biosynthesis. Functionally, 2-oxoglutarate-dependent dioxygenase; part of the gene cluster that mediates the biosynthesis of pneumocandins, lipohexapeptides of the echinocandin family that prevent fungal cell wall formation by non-competitive inhibition of beta-1,3-glucan synthase. The 10,12-dimethylmyristoyl side chain is synthesized by the reducing polyketide synthase gloL/GLPKS4. The thioesterase gloN/GLHYD exclusively interacts with gloL/GLPKS4 to maintain turnover of the polyketide side chain. The 10R,12S-dimethylmyristic acid is then transferred to the first thiolation domain of the nonribosomal peptide synthetase gloA/GLNRPS4 by the acyl-AMP ligase gloD/GLligase, followed by its acylation to L-ornithine to trigger elongation of the cyclic hexapeptide. L-ornithine, 4R-hydroxyl-L-proline (generated from L-proline by the dioxygenase gloF/GLOXY2), 3S-hydroxyl-L-homotyrosine (generated by gloG/GLHtyB, gloH/GLHtyA, gloI/GLHtyC, gloJ/GLHtyD and hydroxylated at C-3 by the dioxygenase gloM/GLOXY1), 3R-hydroxyl-L-glutamine (generated from L-glutamine probably by the dioxygenase gloE/GLOXY3) and 3S-hydroxyl-L-proline (generated from L-proline by the dioxygenase gloF/GLOXY2 to yield pneumocandin B0), or 3S-hydroxyl-4S-methyl-L-proline (generated from L-leucine by the dioxygenase gloC/GLOXY4 to yield pneumocandin A0) are sequentially added to the growing chain. The last C domain of gloA/GLNRPS4 is proposed to be responsible for cyclization by condensation to form the peptide bond between L-ornithine and 3S-hydroxyl-4S-methyl-L-proline (for pneumocandin A0) or 3S-hydroxyl-L-proline (for pneumocandin B0). Finally, the subsequent C-4 hydroxylation of 3S-hydroxyl-L-homotyrosine and L-ornithine dihydroxylation at C-4 and C-5 are performed by the cytochrome P450 monooxygenases gloP/GLP450-1 and gloO/GLP450-2, respectively. The chain is 2-oxoglutarate-dependent dioxygenase gloE from Glarea lozoyensis (strain ATCC 20868 / MF5171).